A 262-amino-acid polypeptide reads, in one-letter code: Abhydrolase domain-containing protein ACTT2-1 (262 aa).

A Peroxisomal targeting signal type 1 motif is present at residues 260–262; it reads SKL.

This sequence belongs to the AB hydrolase superfamily. AKT2 hydrolase family.

It localises to the peroxisome. It functions in the pathway mycotoxin biosynthesis. Functionally, abhydrolase domain-containing protein; part of the gene clusters that mediate the biosynthesis of the host-selective toxins (HSTs) ACT-toxins responsible for brown spot of tangerine disease by the tangerine pathotype which affects tangerines and mandarins. ACT-toxins consist of three moieties, 9,10-epoxy-8-hydroxy-9-methyl-decatrienoic acid (EDA), valine and a polyketide. ACT-toxin I is toxic to both citrus and pear; toxin II the 5''-deoxy derivative of ACT-toxin I, is highly toxic to pear and slightly toxic to citrus. On cellular level, ACT-toxins affect plasma membrane of susceptible cells and cause a sudden increase in loss of K(+) after a few minutes of toxin treatment. The acyl-CoA ligase ACTT1, the hydrolase ACTT2, the enoyl-CoA hydratases ACTT3 and ACTT6, and the acyl-CoA synthetase ACTT5 are all involved in the biosynthesis of the AK-, AF- and ACT-toxin common 9,10-epoxy-8-hydroxy-9-methyl-decatrienoic acid (EDA) structural moiety. The exact role of each enzyme, and of additional enzymes identified within the AF-toxin clusters have still to be determined. On the other hand, ACTTS1 to ACTTS4 are specific to the tangerine pathotype. The function of ACTTS3 is to elongate the polyketide chain portion of ACT-toxin that is unique to this toxin. The enoyl-reductase ACTTS2 might complement the missing enoyl-reductase (ER) domain in ACTTS3 in the synthesis of the polyketide portion of ACT-toxin. The roles of the nonribosomal peptide synthetases-related proteins ACTTS1 and ACTTS4 have also still not been elucidated. This is Abhydrolase domain-containing protein ACTT2-1 from Alternaria alternata (Alternaria rot fungus).